Reading from the N-terminus, the 270-residue chain is Glutamate 5-kinase (270 aa).

Lys-17 contacts ATP. The substrate site is built by Ser-57, Asp-144, and Asn-160. ATP contacts are provided by residues 180–181 (SD) and 222–228 (TGGMTSK).

This sequence belongs to the glutamate 5-kinase family.

It localises to the cytoplasm. It carries out the reaction L-glutamate + ATP = L-glutamyl 5-phosphate + ADP. It functions in the pathway amino-acid biosynthesis; L-proline biosynthesis; L-glutamate 5-semialdehyde from L-glutamate: step 1/2. Its function is as follows. Catalyzes the transfer of a phosphate group to glutamate to form L-glutamate 5-phosphate. The polypeptide is Glutamate 5-kinase (Lactococcus lactis subsp. cremoris (strain SK11)).